A 476-amino-acid chain; its full sequence is MSYEERVNAHPNLGDESDVEEEALVNDYREQVNFDDGMSELERTTSLGAASQTQDLQAQLAAAATPLEYQATLETKFASYDNYCSLFHYILNSEGPVELEVPSYYWAWDVIDEFIYQFESFCRYRNRVARSGSNEEEAQLLRENPNTWGCYSVLNVLYSLIQRSQINEQLAAIKRGEDPLTVAGEYGSRPLYKMLGYFSIIGLLRVHCLLGDFSLALKTLDDIEMNKKAMFARVMAAHFTTYYYVGFSYMMMRRYGDAIRMFSHILVYVSRTKNFQKGGNSYDAIAKKNDQMYALIAICVALHPTRLDDTIHSALREKYGEQLIRLQHGGPEALPLFEELFRSACPKFISPTPPDFDNPAVNVDPVDHHTAIFMDEVKNTLYNPTIRSYLKLYTTMDLKKLAGFLEVEPEKLRSWLLVNKQRSRQVRWVEGGLLEGEPVNANDLDYALENDLIHVSETKAGRRLVDWYLRNLARVY.

Residues 257–452 (DAIRMFSHIL…DLDYALENDL (196 aa)) enclose the PCI domain.

The protein belongs to the eIF-3 subunit L family. Component of the eukaryotic translation initiation factor 3 (eIF-3) complex.

It localises to the cytoplasm. In terms of biological role, component of the eukaryotic translation initiation factor 3 (eIF-3) complex, which is involved in protein synthesis of a specialized repertoire of mRNAs and, together with other initiation factors, stimulates binding of mRNA and methionyl-tRNAi to the 40S ribosome. The eIF-3 complex specifically targets and initiates translation of a subset of mRNAs involved in cell proliferation. The sequence is that of Eukaryotic translation initiation factor 3 subunit L from Aspergillus clavatus (strain ATCC 1007 / CBS 513.65 / DSM 816 / NCTC 3887 / NRRL 1 / QM 1276 / 107).